A 93-amino-acid polypeptide reads, in one-letter code: Putative sodium channel toxin Ts41 (93 aa).

The signal sequence occupies residues 1 to 23 (MKIGVLFTIISMLCLLEVRKICS). 4 disulfide bridges follow: Cys-22/Cys-87, Cys-39/Cys-62, Cys-48/Cys-67, and Cys-52/Cys-69. The LCN-type CS-alpha/beta domain occupies 26 to 88 (EGGYPRYFSF…FWNVYRKYCK (63 aa)).

The protein belongs to the long (4 C-C) scorpion toxin superfamily. Expressed by the venom gland.

The protein resides in the secreted. In terms of biological role, the edited BmKBTx-like may modulate voltage-gated sodium channels (Nav). Its function is as follows. The non-edited form is able to form a heterodimer. In orthologs, a heterodimer with LVP beta-chain induces lipolysis in rat adipocytes, which is mediated through the beta-2 adrenergic receptor pathway (ADRB2). Since no LVP beta-chains have been identified in the venom of this scorpion, it is possible that this protein is not involved in a lipolysis process. This chain is Putative sodium channel toxin Ts41, found in Tityus serrulatus (Brazilian scorpion).